A 116-amino-acid chain; its full sequence is Iron-sulfur cluster insertion protein ErpA (116 aa).

Iron-sulfur cluster-binding residues include Cys-44, Cys-108, and Cys-110.

Belongs to the HesB/IscA family. Homodimer. Requires iron-sulfur cluster as cofactor.

Its function is as follows. Required for insertion of 4Fe-4S clusters for at least IspG. This is Iron-sulfur cluster insertion protein ErpA from Pseudomonas putida (strain ATCC 47054 / DSM 6125 / CFBP 8728 / NCIMB 11950 / KT2440).